A 190-amino-acid chain; its full sequence is Ras-like GTP-binding protein RhoL (190 aa).

18–25 (GDGMVGKT) lines the GTP pocket. The Effector region signature appears at 40–48 (YIPTVFDNH). GTP is bound by residues 65 to 69 (DTAGQ) and 123 to 126 (TKLD). Cys187 carries the cysteine methyl ester modification. The S-geranylgeranyl cysteine moiety is linked to residue Cys187. Positions 188-190 (KIL) are cleaved as a propeptide — removed in mature form.

This sequence belongs to the small GTPase superfamily. Rho family. In terms of tissue distribution, highly expressed in the embryonic cephalic mesoderm starting from stage 6 and fading by stage 11. Hemocyte precursor cells.

It localises to the cell membrane. Functionally, essential for the maturation of hemocytes. The sequence is that of Ras-like GTP-binding protein RhoL (RhoL) from Drosophila melanogaster (Fruit fly).